The sequence spans 554 residues: CTP synthase (554 aa).

Residues 1–279 (MSQPRAEHVT…DAFLIRRLDL (279 aa)) are amidoligase domain. A CTP-binding site is contributed by Ser21. Ser21 provides a ligand contact to UTP. Residues 22-27 (SLGKGL) and Asp79 each bind ATP. Mg(2+) contacts are provided by Asp79 and Glu153. CTP is bound by residues 160 to 162 (DIE), 200 to 205 (KTKPTQ), and Lys236. Residues 200 to 205 (KTKPTQ) and Lys236 each bind UTP. In terms of domain architecture, Glutamine amidotransferase type-1 spans 304–551 (TVALVGKYID…VKAGLKHKND (248 aa)). An L-glutamine-binding site is contributed by Gly367. Cys394 acts as the Nucleophile; for glutamine hydrolysis in catalysis. Residues 395-398 (LGLQ), Glu417, and Arg478 contribute to the L-glutamine site. Residues His524 and Glu526 contribute to the active site.

It belongs to the CTP synthase family. As to quaternary structure, homotetramer.

The enzyme catalyses UTP + L-glutamine + ATP + H2O = CTP + L-glutamate + ADP + phosphate + 2 H(+). The catalysed reaction is L-glutamine + H2O = L-glutamate + NH4(+). It catalyses the reaction UTP + NH4(+) + ATP = CTP + ADP + phosphate + 2 H(+). The protein operates within pyrimidine metabolism; CTP biosynthesis via de novo pathway; CTP from UDP: step 2/2. With respect to regulation, allosterically activated by GTP, when glutamine is the substrate; GTP has no effect on the reaction when ammonia is the substrate. The allosteric effector GTP functions by stabilizing the protein conformation that binds the tetrahedral intermediate(s) formed during glutamine hydrolysis. Inhibited by the product CTP, via allosteric rather than competitive inhibition. In terms of biological role, catalyzes the ATP-dependent amination of UTP to CTP with either L-glutamine or ammonia as the source of nitrogen. Regulates intracellular CTP levels through interactions with the four ribonucleotide triphosphates. The chain is CTP synthase from Corynebacterium kroppenstedtii (strain DSM 44385 / JCM 11950 / CIP 105744 / CCUG 35717).